Reading from the N-terminus, the 207-residue chain is MFITLEGPEGAGKSTNRDYLAARLREQGLDVVLTREPGGTPLAEKVRELLLAPSDEVMAADTELLLVFAARAQHLAQVIRPALARGAVVLCDRFTDATYAYQGGGRGLSVERIAALEQFVQGELRPDLTLVFDLPVEVGLARAAARGRLDRFEQEGQAFFEAVRQAYLQRARREPQRYDLLDAAQPLEAVQRAIDALLPGILERCRG.

An ATP-binding site is contributed by 7 to 14 (GPEGAGKS).

Belongs to the thymidylate kinase family.

It catalyses the reaction dTMP + ATP = dTDP + ADP. Phosphorylation of dTMP to form dTDP in both de novo and salvage pathways of dTTP synthesis. This Pseudomonas putida (strain W619) protein is Thymidylate kinase.